Here is a 395-residue protein sequence, read N- to C-terminus: Protein NDRG1 (395 aa).

The tract at residues 325 to 395 is disordered; sequence RSRTGSAASS…NTPKSMEISC (71 aa). Low complexity predominate over residues 326 to 339; the sequence is SRTGSAASSSSQDG. 4 repeat units span residues 339-348, 349-358, 359-368, and 369-378. Residues 339-378 form a 4 X 10 AA tandem repeats of G-[NS]-R-S-R-[AS]-H-T-[DGN]-[DES] region; that stretch reads GNRSRSHTNEGSRSRSHTGDGNRSRAHTGDGNRSRSHTDS. A compositionally biased stretch (basic and acidic residues) spans 345 to 376; the sequence is HTNEGSRSRSHTGDGNRSRAHTGDGNRSRSHT. Positions 377-389 are enriched in polar residues; that stretch reads DSNNTNSEHNTPK.

Belongs to the NDRG family.

Its function is as follows. May be involved in pronephros development, after specification of the pronephros. The polypeptide is Protein NDRG1 (Xenopus tropicalis (Western clawed frog)).